The chain runs to 307 residues: NAD kinase (307 aa).

Asp78 functions as the Proton acceptor in the catalytic mechanism. NAD(+) is bound by residues 78–79 (DG), His83, 154–155 (NE), Arg165, Arg182, Asp184, and Gln255.

It belongs to the NAD kinase family. The cofactor is a divalent metal cation.

Its subcellular location is the cytoplasm. The enzyme catalyses NAD(+) + ATP = ADP + NADP(+) + H(+). Its function is as follows. Involved in the regulation of the intracellular balance of NAD and NADP, and is a key enzyme in the biosynthesis of NADP. Catalyzes specifically the phosphorylation on 2'-hydroxyl of the adenosine moiety of NAD to yield NADP. In Halorhodospira halophila (strain DSM 244 / SL1) (Ectothiorhodospira halophila (strain DSM 244 / SL1)), this protein is NAD kinase.